We begin with the raw amino-acid sequence, 101 residues long: Olivetolic acid cyclase (101 aa).

Residues 3–97 form the Stress-response A/B barrel domain; that stretch reads VKHLIVLKFK…FWEKLLIFDY (95 aa). His-5 is a 3,5,7-trioxododecanoyl-CoA binding site. Mg(2+) contacts are provided by Val-31, Ile-34, and Met-37. Position 72 (Tyr-72) interacts with 3,5,7-trioxododecanoyl-CoA. Residues Tyr-72 and His-75 each act as acid/base catalyst in the active site.

Homodimer. Expressed in glandular trichomes and at lower levels in female flowers.

The protein localises to the cytoplasm. It catalyses the reaction 3,5,7-trioxododecanoyl-CoA = olivetolate + CoA + H(+). It participates in secondary metabolite biosynthesis; terpenoid biosynthesis. Its function is as follows. Involved in the biosynthesis of cannabinoids-related terpenophenolic natural products, which have pharmacological activity. Polyketide cyclase which functions in concert with OLS/TKS to form olivetolic acid. Has no intrinsic polyketide synthase activity and requires the presence of OLS to produce olivetolic acid. The protein is Olivetolic acid cyclase of Cannabis sativa (Hemp).